We begin with the raw amino-acid sequence, 316 residues long: Glutathione synthetase (316 aa).

The region spanning 125–310 is the ATP-grasp domain; that stretch reads KLFTAWFSDL…ITGMLMDAIE (186 aa). ATP is bound at residue 151–207; that stretch reads WEKHSDIILKPLDGMGGASIFRVKEGDPNLGVIAETLTEHGTRYCMAQNYLPAIKDG. Mg(2+) is bound by residues Glu-281 and Asn-283.

It belongs to the prokaryotic GSH synthase family. Homotetramer. The cofactor is Mg(2+). Requires Mn(2+) as cofactor.

The catalysed reaction is gamma-L-glutamyl-L-cysteine + glycine + ATP = glutathione + ADP + phosphate + H(+). The protein operates within sulfur metabolism; glutathione biosynthesis; glutathione from L-cysteine and L-glutamate: step 2/2. Inhibited by 7,8-dihydrofolate, methotrexate and trimethoprim. This chain is Glutathione synthetase (gshB), found in Escherichia coli (strain K12).